The sequence spans 413 residues: Ferredoxin--NADP reductase (413 aa).

Met1 is subject to N-acetylmethionine. In terms of domain architecture, CpcD-like spans 18-76 (NRLFVYEVIGLSQSTMTDGLDYPIRRSGSTFITVPLKRMNQEMRRITRMGGKIVSIKPL). The disordered stretch occupies residues 74 to 120 (KPLEGDSPLPHTEGIAKPSQSEGSGSEAVANPAPESNKTMTTTPKEK). Over residues 107–116 (PESNKTMTTT) the composition is skewed to polar residues. The 124-residue stretch at 133-256 (KTPYIGKVLE…TGPVGKEMLL (124 aa)) folds into the FAD-binding FR-type domain. FAD is bound by residues 192–195 (RLYS), 213–215 (CVR), Tyr219, 230–232 (VCS), and Thr271. Residues Ser195 and Arg215 each contribute to the NADP(+) site. NADP(+) is bound by residues Thr271, 303–304 (IP), 333–334 (SR), 343–347 (RMYIQ), 372–373 (GL), and Glu411.

This sequence belongs to the ferredoxin--NADP reductase type 1 family. In terms of assembly, purifies with both the classic phycobilisome (PBS) supercomplex (CpcG-PBS) and a photosystem I-associated PBS called CpcL-PBS; it accumulates to a higher level in CpcL-PBS. In both PBS it can be cross-linked to both phycocyanin subunits. FAD is required as a cofactor. In terms of processing, acetylated at the N-terminus; 6% of protein in CpcG-PBS and 12% of protein in CpcL-PBS is acetylated.

Its subcellular location is the cellular thylakoid membrane. It catalyses the reaction 2 reduced [2Fe-2S]-[ferredoxin] + NADP(+) + H(+) = 2 oxidized [2Fe-2S]-[ferredoxin] + NADPH. This chain is Ferredoxin--NADP reductase, found in Synechocystis sp. (strain ATCC 27184 / PCC 6803 / Kazusa).